The following is a 145-amino-acid chain: uncharacterized protein (145 aa).

The tract at residues 95-119 (YVDSTSRTPSAKKDMQGLSVSEKQT) is disordered.

This is an uncharacterized protein from Treponema pallidum (strain Nichols).